A 520-amino-acid chain; its full sequence is Hydroxymethylglutaryl-CoA synthase, cytoplasmic (520 aa).

S4 bears the Phosphoserine mark. A44 lines the (3S)-3-hydroxy-3-methylglutaryl-CoA pocket. 44-46 (AGK) contacts CoA. N6-acetyllysine is present on K46. Residue E95 is the Proton donor/acceptor of the active site. The (3S)-3-hydroxy-3-methylglutaryl-CoA site is built by C129, N167, T171, S221, and H264. C129 functions as the Acyl-thioester intermediate in the catalytic mechanism. Residue N167 participates in CoA binding. S221 serves as a coordination point for CoA. The active-site Proton donor/acceptor is H264. 2 residues coordinate CoA: K269 and K273. Residues K273, N343, and S377 each contribute to the (3S)-3-hydroxy-3-methylglutaryl-CoA site. K273 bears the N6-acetyllysine mark. At T476 the chain carries Phosphothreonine. The disordered stretch occupies residues 492-520 (HIPSPAKKVPRLPATAAEPEAAVISNGEH). Phosphoserine occurs at positions 495 and 516.

It belongs to the thiolase-like superfamily. HMG-CoA synthase family. As to quaternary structure, homodimer.

The protein resides in the cytoplasm. It catalyses the reaction acetoacetyl-CoA + acetyl-CoA + H2O = (3S)-3-hydroxy-3-methylglutaryl-CoA + CoA + H(+). It functions in the pathway metabolic intermediate biosynthesis; (R)-mevalonate biosynthesis; (R)-mevalonate from acetyl-CoA: step 2/3. Its function is as follows. Catalyzes the condensation of acetyl-CoA with acetoacetyl-CoA to form HMG-CoA, which is converted by HMG-CoA reductase (HMGCR) into mevalonate, a precursor for cholesterol synthesis. The sequence is that of Hydroxymethylglutaryl-CoA synthase, cytoplasmic from Pongo abelii (Sumatran orangutan).